Consider the following 77-residue polypeptide: Translation initiation factor IF-1, chloroplastic (77 aa).

Residues 1–71 (MKEQKWIHEG…TRGRIIYRLR (71 aa)) enclose the S1-like domain.

It belongs to the IF-1 family. As to quaternary structure, component of the 30S ribosomal translation pre-initiation complex which assembles on the 30S ribosome in the order IF-2 and IF-3, IF-1 and N-formylmethionyl-tRNA(fMet); mRNA recruitment can occur at any time during PIC assembly.

The protein localises to the plastid. It localises to the chloroplast. In terms of biological role, one of the essential components for the initiation of protein synthesis. Stabilizes the binding of IF-2 and IF-3 on the 30S subunit to which N-formylmethionyl-tRNA(fMet) subsequently binds. Helps modulate mRNA selection, yielding the 30S pre-initiation complex (PIC). Upon addition of the 50S ribosomal subunit IF-1, IF-2 and IF-3 are released leaving the mature 70S translation initiation complex. The polypeptide is Translation initiation factor IF-1, chloroplastic (Hedera helix (English ivy)).